The following is a 579-amino-acid chain: uncharacterized protein (579 aa).

Residues 1 to 100 (MSGRRRNHPG…APPCGPYPGE (100 aa)) form a disordered region. Over residues 80–90 (GQQQSEPQHNS) the composition is skewed to polar residues. 11 helical membrane-spanning segments follow: residues 148–168 (FAVD…AAAS), 175–195 (VALY…LIGP), 206–226 (VALA…IMNY), 228–248 (GATG…MMVL), 279–299 (VFGL…VEFV), 303–323 (LFKL…GALL), 378–398 (LWGN…PAFV), 407–427 (WVQL…NFAG), 448–468 (IAVT…MTTI), 504–524 (SEST…MVYT), and 526–546 (LWVG…QTVV).

The protein to M.tuberculosis Rv0876c.

It is found in the cell membrane. This is an uncharacterized protein from Mycobacterium leprae (strain TN).